Reading from the N-terminus, the 356-residue chain is D-alanine--D-alanine ligase (356 aa).

The ATP-grasp domain maps to Lys-134–Glu-339. Asn-167–Glu-222 is an ATP binding site. Mg(2+) contacts are provided by Asp-293, Glu-306, and Asn-308.

Belongs to the D-alanine--D-alanine ligase family. Mg(2+) serves as cofactor. Mn(2+) is required as a cofactor.

Its subcellular location is the cytoplasm. The enzyme catalyses 2 D-alanine + ATP = D-alanyl-D-alanine + ADP + phosphate + H(+). The protein operates within cell wall biogenesis; peptidoglycan biosynthesis. Functionally, cell wall formation. This is D-alanine--D-alanine ligase from Staphylococcus aureus (strain MSSA476).